Reading from the N-terminus, the 424-residue chain is D-inositol 3-phosphate glycosyltransferase (424 aa).

Position 21 (H21) interacts with 1D-myo-inositol 3-phosphate. Residues 27–28 (QP) and G35 each bind UDP-N-acetyl-alpha-D-glucosamine. 1D-myo-inositol 3-phosphate-binding positions include 32 to 37 (DAGGMN), K90, Y123, T147, and R167. UDP-N-acetyl-alpha-D-glucosamine is bound by residues R241, K246, and Q299. F308, Q309, and A311 together coordinate Mg(2+). Residues E321 and E329 each contribute to the UDP-N-acetyl-alpha-D-glucosamine site. T335 is a Mg(2+) binding site.

Belongs to the glycosyltransferase group 1 family. MshA subfamily. As to quaternary structure, homodimer.

The enzyme catalyses 1D-myo-inositol 3-phosphate + UDP-N-acetyl-alpha-D-glucosamine = 1D-myo-inositol 2-acetamido-2-deoxy-alpha-D-glucopyranoside 3-phosphate + UDP + H(+). Functionally, catalyzes the transfer of a N-acetyl-glucosamine moiety to 1D-myo-inositol 3-phosphate to produce 1D-myo-inositol 2-acetamido-2-deoxy-glucopyranoside 3-phosphate in the mycothiol biosynthesis pathway. The protein is D-inositol 3-phosphate glycosyltransferase of Mycobacterium avium (strain 104).